Here is a 102-residue protein sequence, read N- to C-terminus: UPF0235 protein Swol_0959 (102 aa).

The protein belongs to the UPF0235 family.

This Syntrophomonas wolfei subsp. wolfei (strain DSM 2245B / Goettingen) protein is UPF0235 protein Swol_0959.